The chain runs to 158 residues: Protein-export protein SecB (158 aa).

It belongs to the SecB family. In terms of assembly, homotetramer, a dimer of dimers. One homotetramer interacts with 1 SecA dimer.

It localises to the cytoplasm. One of the proteins required for the normal export of preproteins out of the cell cytoplasm. It is a molecular chaperone that binds to a subset of precursor proteins, maintaining them in a translocation-competent state. It also specifically binds to its receptor SecA. This Bartonella quintana (strain Toulouse) (Rochalimaea quintana) protein is Protein-export protein SecB.